Consider the following 208-residue polypeptide: Redox-sensing transcriptional repressor Rex (208 aa).

A DNA-binding region (H-T-H motif) is located at residues 15-54 (SYYMCLERLLDEGVEVVSSEELARRLDLKASQIRKDLSYF). Position 89–94 (89–94 (GAGNIG)) interacts with NAD(+).

The protein belongs to the transcriptional regulatory Rex family. Homodimer.

Its subcellular location is the cytoplasm. In terms of biological role, modulates transcription in response to changes in cellular NADH/NAD(+) redox state. The protein is Redox-sensing transcriptional repressor Rex of Thermotoga petrophila (strain ATCC BAA-488 / DSM 13995 / JCM 10881 / RKU-1).